A 131-amino-acid polypeptide reads, in one-letter code: Glycine cleavage system H protein (131 aa).

The region spanning 24-106 (RAIVGISDHA…YGEGWIMVIE (83 aa)) is the Lipoyl-binding domain. Position 65 is an N6-lipoyllysine (Lys-65).

Belongs to the GcvH family. In terms of assembly, the glycine cleavage system is composed of four proteins: P, T, L and H. (R)-lipoate is required as a cofactor.

Its function is as follows. The glycine cleavage system catalyzes the degradation of glycine. The H protein shuttles the methylamine group of glycine from the P protein to the T protein. This chain is Glycine cleavage system H protein, found in Xylella fastidiosa (strain M12).